The following is a 405-amino-acid chain: Acetate kinase (405 aa).

N7 is a Mg(2+) binding site. K14 is an ATP binding site. Position 99 (R99) interacts with substrate. The active-site Proton donor/acceptor is D156. 215-219 contributes to the ATP binding site; that stretch reads HLGNG. Position 391 (E391) interacts with Mg(2+).

It belongs to the acetokinase family. As to quaternary structure, homodimer. The cofactor is Mg(2+). Requires Mn(2+) as cofactor.

It localises to the cytoplasm. It carries out the reaction acetate + ATP = acetyl phosphate + ADP. Its pathway is metabolic intermediate biosynthesis; acetyl-CoA biosynthesis; acetyl-CoA from acetate: step 1/2. Functionally, catalyzes the formation of acetyl phosphate from acetate and ATP. Can also catalyze the reverse reaction. The sequence is that of Acetate kinase from Nostoc sp. (strain PCC 7120 / SAG 25.82 / UTEX 2576).